Here is a 702-residue protein sequence, read N- to C-terminus: MNSLFASTARGLEELLKTELEKLGAVGCQVVQGGVHFQGDTRLIYQSLMWSRLASRIILPMGECKVYSDLDLYLGVQAINWTEIFNPGATFAVHFSGLNDTIRNSQYGAMKVKDAIVDAFTRKNLPRPNVDRESPDLRINVWLNKETASIALDLSGDGLHLRGYRDRTGLAPIKETLAAAIVMRSGWQPGTPLLDPMCGSGTLLIEAAMWATDRAPGLHRGHWGFSGWAQHDETIWQEVKAEAQTRARKGLAEYSSHFYGSDSDARVIERARSNARRAGIGELITFEVKDVAQLSNPLPKGPYGTVISNPPYGERLDSEPALIALHSLLGRTMKNQFGGWNLSLFSASPDLLGSLQLRADKQFKAKNGPLDCVQKNYHIAETTADSKPATVAEDYANRLRKNLKKLEKWARQEGIECYRLYDADLPEYNVAVDRYGDWAVIQEYAPPKTVDAQKARQRLFDIIAATLSVLGIPPNKLVLKTRERQKGKNQYQKMSEKGEFLEVSEYNARLWVNLTDYLDTGLFLDHRIARRMLGEMSKGKDFLNLFSYTGSASVHAGLGGARSTTTVDMSRTYLEWAERNLRLNGLSGRAHRLIQADCLGWLREANEQFDLIFIDPPTFSNSKRMEESFDVQRDHVALMKDLKRLLRKGGTIMFSNNKRGFRMDLEGLAELGLTAQEITQKTLSPDFARNRQIHNCWLIRAA.

The 112-residue stretch at 43 to 154 (LIYQSLMWSR…KETASIALDL (112 aa)) folds into the THUMP domain.

The protein belongs to the methyltransferase superfamily. RlmKL family.

The protein resides in the cytoplasm. It carries out the reaction guanosine(2445) in 23S rRNA + S-adenosyl-L-methionine = N(2)-methylguanosine(2445) in 23S rRNA + S-adenosyl-L-homocysteine + H(+). It catalyses the reaction guanosine(2069) in 23S rRNA + S-adenosyl-L-methionine = N(2)-methylguanosine(2069) in 23S rRNA + S-adenosyl-L-homocysteine + H(+). Functionally, specifically methylates the guanine in position 2445 (m2G2445) and the guanine in position 2069 (m7G2069) of 23S rRNA. The sequence is that of Ribosomal RNA large subunit methyltransferase K/L from Salmonella agona (strain SL483).